The primary structure comprises 364 residues: MTLTIAELARALDARLWGDGSLIVNGAAEAGQAGEGQIALATSPAYAEKLSPGGMALLAEGADPEALGLRAAILVGRPRLAMAGLTRAFDPGPGIAPGIHPSAVIDPTAELPEDAAIGPFVVIGPRVRIGAGARIASHVSIGADTVIGRDALIHAGVRIAHGVTIGDRVILNPGVSLGADGFSFVTPEKSGVEEIRQSLGERQEIRQQHWTRIHSLGGLEIDDDVEIGANSTVDRGTIRATRIGRGTKIDNLVQVGHNCVVGEDCLLCGLVGVAGSARIGNRVVLGGQVGVSDNIFVGDDVIAGGATKIFTNAPAGRVLLGSPAVRMETHVEAQKNIRRLPRLYAQVAELRETVKKLLDKGDVE.

His-257 (proton acceptor) is an active-site residue.

It belongs to the transferase hexapeptide repeat family. LpxD subfamily. In terms of assembly, homotrimer.

The catalysed reaction is a UDP-3-O-[(3R)-3-hydroxyacyl]-alpha-D-glucosamine + a (3R)-hydroxyacyl-[ACP] = a UDP-2-N,3-O-bis[(3R)-3-hydroxyacyl]-alpha-D-glucosamine + holo-[ACP] + H(+). Its pathway is bacterial outer membrane biogenesis; LPS lipid A biosynthesis. Its function is as follows. Catalyzes the N-acylation of UDP-3-O-acylglucosamine using 3-hydroxyacyl-ACP as the acyl donor. Is involved in the biosynthesis of lipid A, a phosphorylated glycolipid that anchors the lipopolysaccharide to the outer membrane of the cell. The sequence is that of UDP-3-O-acylglucosamine N-acyltransferase from Paracoccus denitrificans (strain Pd 1222).